The following is a 398-amino-acid chain: Probable aminomethyltransferase (398 aa).

This sequence belongs to the GcvT family. In terms of assembly, the glycine cleavage system is composed of four proteins: P, T, L and H.

It carries out the reaction N(6)-[(R)-S(8)-aminomethyldihydrolipoyl]-L-lysyl-[protein] + (6S)-5,6,7,8-tetrahydrofolate = N(6)-[(R)-dihydrolipoyl]-L-lysyl-[protein] + (6R)-5,10-methylene-5,6,7,8-tetrahydrofolate + NH4(+). Its function is as follows. The glycine cleavage system catalyzes the degradation of glycine. This chain is Probable aminomethyltransferase, found in Thermococcus gammatolerans (strain DSM 15229 / JCM 11827 / EJ3).